The primary structure comprises 138 residues: Large ribosomal subunit protein eL32 (138 aa).

This sequence belongs to the eukaryotic ribosomal protein eL32 family.

In Saccharolobus solfataricus (strain ATCC 35092 / DSM 1617 / JCM 11322 / P2) (Sulfolobus solfataricus), this protein is Large ribosomal subunit protein eL32 (rpl32e).